A 381-amino-acid polypeptide reads, in one-letter code: Dual specificity protein phosphatase 6 (381 aa).

Residues glycine 30–glutamate 148 enclose the Rhodanese domain. Residues serine 176–glutamine 203 are disordered. Residues asparagine 189–glutamine 203 are compositionally biased toward polar residues. A Tyrosine-protein phosphatase domain is found at phenylalanine 206–leucine 349. The Phosphocysteine intermediate role is filled by cysteine 293.

This sequence belongs to the protein-tyrosine phosphatase family. Non-receptor class dual specificity subfamily. In terms of assembly, interacts with MAPK1/ERK2. Post-translationally, ubiquitinated by the SCF(FBXO31) complex, leading to its proteasomal degradation.

The protein resides in the cytoplasm. It catalyses the reaction O-phospho-L-tyrosyl-[protein] + H2O = L-tyrosyl-[protein] + phosphate. The catalysed reaction is O-phospho-L-seryl-[protein] + H2O = L-seryl-[protein] + phosphate. The enzyme catalyses O-phospho-L-threonyl-[protein] + H2O = L-threonyl-[protein] + phosphate. In terms of biological role, dual specificity protein phosphatase, which mediates dephosphorylation and inactivation of MAP kinases. Has a specificity for the ERK family. Plays an important role in alleviating acute postoperative pain. Necessary for the normal dephosphorylation of the long-lasting phosphorylated forms of spinal MAPK1/3 and MAP kinase p38 induced by peripheral surgery, which drives the resolution of acute postoperative allodynia. Also important for dephosphorylation of MAPK1/3 in local wound tissue, which further contributes to resolution of acute pain. The sequence is that of Dual specificity protein phosphatase 6 (Dusp6) from Mus musculus (Mouse).